The following is a 622-amino-acid chain: Protein lev-9 (622 aa).

Positions 1-16 are cleaved as a signal peptide; that stretch reads MRFLLLLAISITYASA. The WAP; atypical domain occupies 17–61; sequence LSCPEVTLSQRPKHCKKECIADEDCKRNKRCMCDGECGLSCVNPI. Intrachain disulfides connect Cys-19/Cys-49, Cys-35/Cys-47, Cys-41/Cys-57, Cys-64/Cys-105, Cys-91/Cys-118, Cys-124/Cys-171, Cys-154/Cys-188, Cys-193/Cys-233, Cys-219/Cys-246, Cys-251/Cys-291, Cys-277/Cys-304, Cys-309/Cys-349, Cys-335/Cys-362, Cys-366/Cys-409, Cys-395/Cys-420, Cys-425/Cys-467, Cys-452/Cys-481, Cys-486/Cys-543, and Cys-529/Cys-556. Sushi domains are found at residues 62–120, 122–190, 191–248, 249–306, 307–364, 365–422, 423–483, and 484–558; these read AMCH…VCRL, LKCG…RCKA, RACP…NCKA, TECS…RCEE, IRCS…RCLA, SCRV…VCSP, LSCH…KCLP, and SWCE…KCVS. A glycan (N-linked (GlcNAc...) asparagine) is linked at Asn-411. The propeptide occupies 576-622; sequence SLPGRAVREYVDDELSTHRQHSGKCGIVSGKLERMIMQHSDNGVSVC.

In terms of processing, proteolytic processing of the C-terminus is required for clustering activity but not for secretion nor traffic.

It is found in the synapse. It localises to the secreted. Scaffolding protein that is necessary to cluster acetylcholine receptors at neuromuscular junctions. In Caenorhabditis elegans, this protein is Protein lev-9 (lev-9).